Reading from the N-terminus, the 694-residue chain is Elongation factor G (694 aa).

One can recognise a tr-type G domain in the interval 8-282 (KDYRNIGIMA…AVIDYLPSPV (275 aa)). GTP-binding positions include 17-24 (AHIDAGKT), 81-85 (DTPGH), and 135-138 (NKMD).

Belongs to the TRAFAC class translation factor GTPase superfamily. Classic translation factor GTPase family. EF-G/EF-2 subfamily.

Its subcellular location is the cytoplasm. Functionally, catalyzes the GTP-dependent ribosomal translocation step during translation elongation. During this step, the ribosome changes from the pre-translocational (PRE) to the post-translocational (POST) state as the newly formed A-site-bound peptidyl-tRNA and P-site-bound deacylated tRNA move to the P and E sites, respectively. Catalyzes the coordinated movement of the two tRNA molecules, the mRNA and conformational changes in the ribosome. This chain is Elongation factor G, found in Mesomycoplasma hyopneumoniae (strain J / ATCC 25934 / NCTC 10110) (Mycoplasma hyopneumoniae).